A 174-amino-acid polypeptide reads, in one-letter code: Small ribosomal subunit protein uS5 (174 aa).

The S5 DRBM domain maps to 17–80 (WQERVVQIRR…ADGKKHLIDV (64 aa)).

This sequence belongs to the universal ribosomal protein uS5 family. As to quaternary structure, part of the 30S ribosomal subunit. Contacts proteins S4 and S8.

Functionally, with S4 and S12 plays an important role in translational accuracy. Located at the back of the 30S subunit body where it stabilizes the conformation of the head with respect to the body. This Thermosynechococcus vestitus (strain NIES-2133 / IAM M-273 / BP-1) protein is Small ribosomal subunit protein uS5.